Consider the following 429-residue polypeptide: Enolase (429 aa).

Residue glutamine 163 coordinates (2R)-2-phosphoglycerate. The active-site Proton donor is the glutamate 205. Positions 242, 285, and 312 each coordinate Mg(2+). (2R)-2-phosphoglycerate is bound by residues lysine 337, arginine 366, serine 367, and lysine 388. The Proton acceptor role is filled by lysine 337.

Belongs to the enolase family. It depends on Mg(2+) as a cofactor.

It localises to the cytoplasm. Its subcellular location is the secreted. It is found in the cell surface. The enzyme catalyses (2R)-2-phosphoglycerate = phosphoenolpyruvate + H2O. It functions in the pathway carbohydrate degradation; glycolysis; pyruvate from D-glyceraldehyde 3-phosphate: step 4/5. In terms of biological role, catalyzes the reversible conversion of 2-phosphoglycerate (2-PG) into phosphoenolpyruvate (PEP). It is essential for the degradation of carbohydrates via glycolysis. In Oceanobacillus iheyensis (strain DSM 14371 / CIP 107618 / JCM 11309 / KCTC 3954 / HTE831), this protein is Enolase.